The chain runs to 190 residues: MLLSDRDLRAEISSGRLGIDPFDDTLVQPSSIDVRLDCLFRVFNNTRYTHIDPAKQQDELTSLVQPVDGEPFVLHPGEFVLGSTLELFTLPDNLAGRLEGKSSLGRLGLLTHSTAGFIDPGFSGHITLELSNVANLPITLWPGMKIGQLCMLRLTSPSEHPYGSSRAGSKYQGQRGPTPSRSYQNFIRST.

DCTP is bound by residues 101–106 (KSSLGR), Asp119, 127–129 (TLE), Gln148, Tyr162, Lys170, and Gln174. Residue Glu129 is the Proton donor/acceptor of the active site. The disordered stretch occupies residues 160–190 (HPYGSSRAGSKYQGQRGPTPSRSYQNFIRST). Positions 171–190 (YQGQRGPTPSRSYQNFIRST) are enriched in polar residues.

This sequence belongs to the dCTP deaminase family. In terms of assembly, homotrimer.

It carries out the reaction dCTP + 2 H2O = dUMP + NH4(+) + diphosphate. It participates in pyrimidine metabolism; dUMP biosynthesis; dUMP from dCTP: step 1/1. Functionally, bifunctional enzyme that catalyzes both the deamination of dCTP to dUTP and the hydrolysis of dUTP to dUMP without releasing the toxic dUTP intermediate. In Mycobacterium tuberculosis (strain ATCC 25177 / H37Ra), this protein is dCTP deaminase, dUMP-forming.